The sequence spans 75 residues: UPF0181 protein ETA_15280 (75 aa).

Belongs to the UPF0181 family.

This Erwinia tasmaniensis (strain DSM 17950 / CFBP 7177 / CIP 109463 / NCPPB 4357 / Et1/99) protein is UPF0181 protein ETA_15280.